Here is a 307-residue protein sequence, read N- to C-terminus: Protoheme IX farnesyltransferase (307 aa).

The next 8 helical transmembrane spans lie at 32–52 (VVEL…RGIP), 54–74 (LWLV…AGAF), 105–125 (LVFA…FTNW), 126–146 (LAAG…TLIL), 169–189 (WAVV…VIFL), 222–242 (VVGL…LLLI), 244–264 (VARM…WFLY), and 287–307 (GSIA…LLPF).

This sequence belongs to the UbiA prenyltransferase family. Protoheme IX farnesyltransferase subfamily.

It is found in the cell membrane. It carries out the reaction heme b + (2E,6E)-farnesyl diphosphate + H2O = Fe(II)-heme o + diphosphate. It participates in porphyrin-containing compound metabolism; heme O biosynthesis; heme O from protoheme: step 1/1. In terms of biological role, converts heme B (protoheme IX) to heme O by substitution of the vinyl group on carbon 2 of heme B porphyrin ring with a hydroxyethyl farnesyl side group. This is Protoheme IX farnesyltransferase from Leifsonia xyli subsp. xyli (strain CTCB07).